The sequence spans 388 residues: P2X purinoceptor 4 (388 aa).

The Cytoplasmic segment spans residues 1–33; sequence MAGCCAALAAFLFEYDTPRIVLIRSRKVGLMNR. A helical membrane pass occupies residues 34-54; sequence AVQLLILAYVIGWVFVWEKGY. Residues 55 to 338 lie on the Extracellular side of the membrane; the sequence is QETDSVVSSV…KFDIIPTMIN (284 aa). K67 and K69 together coordinate ATP. Residues K67 and K69 each coordinate CTP. 2 N-linked (GlcNAc...) asparagine glycosylation sites follow: N75 and N110. 3 disulfides stabilise this stretch: C116–C165, C126–C149, and C132–C159. 2 N-linked (GlcNAc...) asparagine glycosylation sites follow: N153 and N184. 2 residues coordinate ATP: T186 and L188. Residue T186 participates in CTP binding. N-linked (GlcNAc...) asparagine glycans are attached at residues N199 and N208. 2 cysteine pairs are disulfide-bonded: C217–C227 and C261–C270. The ATP site is built by N293, R295, and K313. Positions 293, 295, and 313 each coordinate CTP. A helical transmembrane segment spans residues 339 to 359; it reads IGSGLALLGMATVLCDIIVLY. At 360–388 the chain is on the cytoplasmic side; it reads CMKKRLYYREKKYKYVEDYEQGLASELDQ.

This sequence belongs to the P2X receptor family. Functional P2RXs are organized as homomeric and heteromeric trimers. Forms heterotrimer with P2RX1. Interacts with P2RX7 (via C-terminus); this interaction is functional only in the presence of ATP. Forms heterotrimer with P2RX4; functional differences between homomeric P2RX4 and P2RX4/6 heterotrimer are minor. Interacts with AP1M2.

It is found in the cell membrane. The protein localises to the lysosome membrane. It carries out the reaction K(+)(in) = K(+)(out). The catalysed reaction is Na(+)(in) = Na(+)(out). It catalyses the reaction Ca(2+)(in) = Ca(2+)(out). With respect to regulation, activated by ATP. pH-dependent and inhibited by acidic pH. Functionally, ATP-gated nonselective transmembrane cation channel permeable to potassium, sodium and calcium. CTP, but not GTP or UTP, functions as a weak affinity agonist for P2RX4. Activated by extracellularly released ATP, it plays multiple role in immunity and central nervous system physiology. Plays a key role in initial steps of T-cell activation and Ca(2+) microdomain formation. Also participates in basal T-cell activity without TCR/CD3 stimulation. Promotes the differentiation and activation of Th17 cells via expression of retinoic acid-related orphan receptor C/RORC. Upon activation, drives microglia motility via the PI3K/Akt pathway. Could also function as an ATP-gated cation channel of lysosomal membranes. The protein is P2X purinoceptor 4 (P2RX4) of Homo sapiens (Human).